The primary structure comprises 428 residues: Leucine-rich repeat-containing protein 42 (428 aa).

LRR repeat units lie at residues 149–170 (VLCS…EEIK), 174–195 (ELTC…LEHL), 202–222 (SVTQ…RKMT), 234–255 (NLTL…GYLF), and 259–280 (KLNC…KHKL). The tract at residues 379–412 (KHEAISSQESKKSKKRPFEESETEQNNSSQPSKQ) is disordered. Phosphoserine is present on residues serine 406 and serine 407.

Belongs to the LRRC42 family.

The protein is Leucine-rich repeat-containing protein 42 (LRRC42) of Homo sapiens (Human).